The following is a 103-amino-acid chain: Signal recognition particle 19 kDa protein (103 aa).

Belongs to the SRP19 family. Part of the signal recognition particle protein translocation system, which is composed of SRP and FtsY. Archaeal SRP consists of a 7S RNA molecule of 300 nucleotides and two protein subunits: SRP54 and SRP19.

The protein resides in the cytoplasm. Involved in targeting and insertion of nascent membrane proteins into the cytoplasmic membrane. Binds directly to 7S RNA and mediates binding of the 54 kDa subunit of the SRP. In Hyperthermus butylicus (strain DSM 5456 / JCM 9403 / PLM1-5), this protein is Signal recognition particle 19 kDa protein.